The chain runs to 251 residues: uncharacterized protein (251 aa).

The region spanning 4 to 152 (IEITKDNIED…YFQLMALTWN (149 aa)) is the N-acetyltransferase domain.

It belongs to the acetyltransferase family.

This is an uncharacterized protein from Bacillus subtilis (strain 168).